The primary structure comprises 343 residues: L-threonine 3-dehydrogenase (343 aa).

Position 40 (C40) interacts with Zn(2+). Catalysis depends on charge relay system residues T42 and H45. Residues H65, E66, C95, C98, C101, and C109 each coordinate Zn(2+). NAD(+) is bound by residues I177, D197, R202, 264–266, and 288–289; these read LGI and IY.

The protein belongs to the zinc-containing alcohol dehydrogenase family. As to quaternary structure, homotetramer. Requires Zn(2+) as cofactor.

The protein localises to the cytoplasm. The enzyme catalyses L-threonine + NAD(+) = (2S)-2-amino-3-oxobutanoate + NADH + H(+). Its pathway is amino-acid degradation; L-threonine degradation via oxydo-reductase pathway; glycine from L-threonine: step 1/2. Functionally, catalyzes the NAD(+)-dependent oxidation of L-threonine to 2-amino-3-ketobutyrate. The chain is L-threonine 3-dehydrogenase from Aliivibrio fischeri (strain MJ11) (Vibrio fischeri).